A 29-amino-acid chain; its full sequence is U20-ctenitoxin-Co1a (29 aa).

2 disulfide bridges follow: cysteine 3–cysteine 16 and cysteine 10–cysteine 21.

As to expression, expressed by the venom gland.

It localises to the secreted. This Ctenus ornatus (Brazilian spider) protein is U20-ctenitoxin-Co1a.